Consider the following 92-residue polypeptide: uncharacterized protein (92 aa).

A run of 3 helical transmembrane segments spans residues 1-21, 30-50, and 62-82; these read MNIY…LVGL, ANVL…IVVI, and IALA…KVIG.

It to M.thermoautotrophicum MTH1250.

It is found in the cell membrane. This is an uncharacterized protein from Methanocaldococcus jannaschii (strain ATCC 43067 / DSM 2661 / JAL-1 / JCM 10045 / NBRC 100440) (Methanococcus jannaschii).